A 344-amino-acid polypeptide reads, in one-letter code: Heat-inducible transcription repressor HrcA (344 aa).

This sequence belongs to the HrcA family.

Functionally, negative regulator of class I heat shock genes (grpE-dnaK-dnaJ and groELS operons). Prevents heat-shock induction of these operons. The polypeptide is Heat-inducible transcription repressor HrcA (Streptococcus pyogenes serotype M1).